The sequence spans 310 residues: D-alanine--D-alanine ligase (310 aa).

One can recognise an ATP-grasp domain in the interval 107 to 302; sequence KQAFQAARLT…FEDLVERILA (196 aa). 135 to 188 contributes to the ATP binding site; the sequence is EFSLPVVVKPSQEGSSVGVSIVKKESEFAAAMKEAFRYDREILVEQFIKGSEVQ. Mg(2+)-binding residues include D256, E269, and N271.

The protein belongs to the D-alanine--D-alanine ligase family. Mg(2+) is required as a cofactor. Mn(2+) serves as cofactor.

The protein localises to the cytoplasm. The catalysed reaction is 2 D-alanine + ATP = D-alanyl-D-alanine + ADP + phosphate + H(+). It functions in the pathway cell wall biogenesis; peptidoglycan biosynthesis. Its function is as follows. Cell wall formation. The polypeptide is D-alanine--D-alanine ligase (Geotalea uraniireducens (strain Rf4) (Geobacter uraniireducens)).